A 124-amino-acid chain; its full sequence is Fluoride-specific ion channel FluC (124 aa).

Helical transmembrane passes span 4 to 24 (VLYIAVFGALGCLSRYYLSGW), 32 to 52 (AFPYGTFAVNIVGAFCIGLIM), 67 to 87 (IGLTIGFLGGLTTFSTFSYET), and 101 to 121 (ANVLFSVMTCLVFTWLGIIVA). Gly75 and Thr78 together coordinate Na(+).

It belongs to the fluoride channel Fluc/FEX (TC 1.A.43) family.

The protein resides in the cell inner membrane. The catalysed reaction is fluoride(in) = fluoride(out). Na(+) is not transported, but it plays an essential structural role and its presence is essential for fluoride channel function. Its function is as follows. Fluoride-specific ion channel. Important for reducing fluoride concentration in the cell, thus reducing its toxicity. This is Fluoride-specific ion channel FluC from Geotalea uraniireducens (strain Rf4) (Geobacter uraniireducens).